A 1000-amino-acid polypeptide reads, in one-letter code: Exportin-T (1000 aa).

It belongs to the exportin family.

The protein resides in the nucleus. It localises to the cytoplasm. Its function is as follows. tRNA nucleus export receptor which facilitates tRNA translocation across the nuclear pore complex. Involved in pre-tRNA splicing, probably by affecting the interaction of pre-tRNA with splicing endonuclease. The chain is Exportin-T (LOS1) from Debaryomyces hansenii (strain ATCC 36239 / CBS 767 / BCRC 21394 / JCM 1990 / NBRC 0083 / IGC 2968) (Yeast).